Here is a 518-residue protein sequence, read N- to C-terminus: Major facilitator superfamily multidrug transporter mfsC (518 aa).

7 consecutive transmembrane segments (helical) span residues 27–47 (VLLT…SVLF), 65–85 (WVLI…GQLG), 88–108 (FGLE…NVIN), 123–143 (ISGV…SNTF), 152–172 (ALAI…VVGS), 183–203 (IFWL…LFLP), and 212–232 (PIDI…VYGL). The N-linked (GlcNAc...) asparagine glycan is linked to Asn233. 7 helical membrane-spanning segments follow: residues 242–262 (SAAM…FLWV), 281–301 (FLVM…WFFI), 315–335 (ILTA…GVFA), 347–367 (ILVA…FAGP), 380–400 (TAII…SILL), 409–429 (AVAG…ILAG), and 455–475 (AFWL…VCYW).

The protein belongs to the major facilitator superfamily. EmrB family.

Its subcellular location is the membrane. In terms of biological role, major facilitator superfamily transporter that may be involved in A.fumigatus adaptation to azoles such as vorizonazole. This chain is Major facilitator superfamily multidrug transporter mfsC, found in Aspergillus fumigatus (strain ATCC MYA-4609 / CBS 101355 / FGSC A1100 / Af293) (Neosartorya fumigata).